Reading from the N-terminus, the 469-residue chain is UDP-N-acetylmuramate--L-alanine ligase (469 aa).

ATP is bound at residue 112-118 (GTHGKTT).

Belongs to the MurCDEF family.

Its subcellular location is the cytoplasm. The catalysed reaction is UDP-N-acetyl-alpha-D-muramate + L-alanine + ATP = UDP-N-acetyl-alpha-D-muramoyl-L-alanine + ADP + phosphate + H(+). It participates in cell wall biogenesis; peptidoglycan biosynthesis. Its function is as follows. Cell wall formation. This chain is UDP-N-acetylmuramate--L-alanine ligase, found in Leptothrix cholodnii (strain ATCC 51168 / LMG 8142 / SP-6) (Leptothrix discophora (strain SP-6)).